The following is a 277-amino-acid chain: Diaminopimelate epimerase (277 aa).

The substrate site is built by N13, Q46, and N66. C75 functions as the Proton donor in the catalytic mechanism. Substrate-binding positions include 76–77 (GN), N159, N192, and 210–211 (ER). C219 serves as the catalytic Proton acceptor. 220-221 (GT) is a binding site for substrate.

This sequence belongs to the diaminopimelate epimerase family. As to quaternary structure, homodimer.

The protein localises to the cytoplasm. It catalyses the reaction (2S,6S)-2,6-diaminopimelate = meso-2,6-diaminopimelate. It functions in the pathway amino-acid biosynthesis; L-lysine biosynthesis via DAP pathway; DL-2,6-diaminopimelate from LL-2,6-diaminopimelate: step 1/1. Its function is as follows. Catalyzes the stereoinversion of LL-2,6-diaminopimelate (L,L-DAP) to meso-diaminopimelate (meso-DAP), a precursor of L-lysine and an essential component of the bacterial peptidoglycan. In Aromatoleum aromaticum (strain DSM 19018 / LMG 30748 / EbN1) (Azoarcus sp. (strain EbN1)), this protein is Diaminopimelate epimerase.